The chain runs to 97 residues: ATP-dependent Clp protease adapter protein ClpS (97 aa).

This sequence belongs to the ClpS family. Binds to the N-terminal domain of the chaperone ClpA.

Functionally, involved in the modulation of the specificity of the ClpAP-mediated ATP-dependent protein degradation. The protein is ATP-dependent Clp protease adapter protein ClpS of Nostoc sp. (strain PCC 7120 / SAG 25.82 / UTEX 2576).